A 174-amino-acid polypeptide reads, in one-letter code: NADH-ubiquinone oxidoreductase chain 6 (174 aa).

5 helical membrane-spanning segments follow: residues 1–21 (MTYV…GFSS), 24–44 (SPIY…MIIL), 47–67 (GGAY…MVVF), 86–106 (FEVL…VLWV), and 151–171 (WLVV…IEIT).

This sequence belongs to the complex I subunit 6 family. In terms of assembly, core subunit of respiratory chain NADH dehydrogenase (Complex I) which is composed of 45 different subunits.

It is found in the mitochondrion inner membrane. It carries out the reaction a ubiquinone + NADH + 5 H(+)(in) = a ubiquinol + NAD(+) + 4 H(+)(out). Core subunit of the mitochondrial membrane respiratory chain NADH dehydrogenase (Complex I) which catalyzes electron transfer from NADH through the respiratory chain, using ubiquinone as an electron acceptor. Essential for the catalytic activity and assembly of complex I. The chain is NADH-ubiquinone oxidoreductase chain 6 (MT-ND6) from Papio hamadryas (Hamadryas baboon).